A 117-amino-acid chain; its full sequence is Ubiquitin-like protein pmt3/smt3 (117 aa).

Positions 1–37 (MSESPSANISDADKSAITPTTGDTSQQDVKPSTEHIN) are disordered. Polar residues predominate over residues 17–30 (ITPTTGDTSQQDVK). Residues 35–115 (HINLKVVGQD…LEQLGGCTHL (81 aa)) form the Ubiquitin-like domain. Glycine 111 participates in a covalent cross-link: Glycyl lysine isopeptide (Gly-Lys) (interchain with K-? in acceptor proteins). A propeptide spanning residues 112-117 (CTHLCL) is cleaved from the precursor.

It belongs to the ubiquitin family. SUMO subfamily. Interacts with rfp1.

It localises to the nucleus. In terms of biological role, required for chromosome segregation where it may be involved in microtubule assembly. Loss of smt3 leads to an increase in telomere length. This chain is Ubiquitin-like protein pmt3/smt3 (pmt3), found in Schizosaccharomyces pombe (strain 972 / ATCC 24843) (Fission yeast).